Reading from the N-terminus, the 166-residue chain is Protein UTR5 (166 aa).

This is Protein UTR5 (UTR5) from Saccharomyces cerevisiae (strain ATCC 204508 / S288c) (Baker's yeast).